The sequence spans 455 residues: MTHSQDLFDRARDVIPGGVNSPVRAFGSVGGTPRMMVRAAGPYVTDADGVEYVDLVNSWGPAILGHARPEVVKAVQDAAALGLGFGATTPAETELAELVTERVRVAGVDGSPDRRPVEKLRLVSTGTEATMTAIRLARGFTGRDLLVKFAGHYHGHSDSLLAEAGSGVATLALPGSAGIPEAIAAQTIVVPYNDLGAVRAVFAEHGPRIAAVITEAAAANMGVVPPLPGFTAELARIAHDNGSLLISDEVLTGFRVHPAGYWGLDNDGLAADHPDAWTPDLVTYGKVIGGGLPVAALGGRADVMDHLAPLGPVYQAGTLSGNPVAVAAGLTTLRLADADVYRALDIAADILIYAVELAFDRAGLAYSVQRAGSLFSFTFGTPPEHGITDYATVQAQETWRYPAFFHSMLDQGVSLPPSVFEAWFVSAAMDEASLDRVIRALPAAARAAAAATPPA.

Lysine 286 is subject to N6-(pyridoxal phosphate)lysine.

Belongs to the class-III pyridoxal-phosphate-dependent aminotransferase family. HemL subfamily. As to quaternary structure, homodimer. Pyridoxal 5'-phosphate is required as a cofactor.

The protein resides in the cytoplasm. It carries out the reaction (S)-4-amino-5-oxopentanoate = 5-aminolevulinate. It participates in porphyrin-containing compound metabolism; protoporphyrin-IX biosynthesis; 5-aminolevulinate from L-glutamyl-tRNA(Glu): step 2/2. The protein is Glutamate-1-semialdehyde 2,1-aminomutase of Clavibacter sepedonicus (Clavibacter michiganensis subsp. sepedonicus).